We begin with the raw amino-acid sequence, 230 residues long: Dephospho-CoA kinase (230 aa).

The DPCK domain occupies 3–206 (LVGLTGGIAS…EPLTWKERLR (204 aa)). ATP is bound at residue 8-15 (GGIASGKS).

Belongs to the CoaE family.

The enzyme catalyses 3'-dephospho-CoA + ATP = ADP + CoA + H(+). It functions in the pathway cofactor biosynthesis; coenzyme A biosynthesis; CoA from (R)-pantothenate: step 5/5. Catalyzes the phosphorylation of the 3'-hydroxyl group of dephosphocoenzyme A to form coenzyme A. This is Dephospho-CoA kinase from Oryza sativa subsp. japonica (Rice).